Reading from the N-terminus, the 332-residue chain is Torsin-1A (332 aa).

Positions 1-20 are cleaved as a signal peptide; the sequence is MKLGRAALGLLLLAPSVVQA. The segment at 91–251 is interaction with SNAPIN; sequence KPKKPLTLSL…VSVFNNKNSG (161 aa). 102–109 lines the ATP pocket; that stretch reads GWTGTGKN. N-linked (GlcNAc...) asparagine glycosylation is found at N143 and N158. The interval 251–332 is interaction with KLC1; that stretch reads GFWHSSLIDR…FTKLDYYYDD (82 aa). Residues 312-332 are interaction with SYNE3; sequence RVFSDKGCKTVFTKLDYYYDD.

The protein belongs to the ClpA/ClpB family. Torsin subfamily. As to quaternary structure, homohexamer. Interacts with TOR1B; the interaction may be specific of neural tissues. Interacts (ATP-bound) with TOR1AIP1 and TOR1AIP2; the interactions induce ATPase activity. Interacts with KLHL14; preferentially when ATP-free. Interacts with KLC1 (via TPR repeats); the interaction associates TOR1A with the kinesin oligomeric complex. Interacts with COPS4; the interaction associates TOR1A with the CSN complex. Interacts with SNAPIN; the interaction is direct and associates SNAPIN with the CSN complex. Interacts with STON2. Interacts (ATP-bound) with SYNE3 (via KASH domain); the interaction is required for SYNE3 nuclear envelope localization. Interacts with VIM; the interaction associates TOR1A with the cytoskeleton. Interacts with PLEC. Interacts (ATP-bound) with SLC6A3; regulates SLC6A3 transport to the plasma membrane. N-glycosylated.

It is found in the endoplasmic reticulum lumen. Its subcellular location is the nucleus membrane. It localises to the cell projection. The protein localises to the growth cone. The protein resides in the cytoplasmic vesicle membrane. It is found in the cytoplasmic vesicle. Its subcellular location is the secretory vesicle. It localises to the synaptic vesicle. The protein localises to the cytoplasm. The protein resides in the cytoskeleton. The enzyme catalyses ATP + H2O = ADP + phosphate + H(+). Protein with chaperone functions important for the control of protein folding, processing, stability and localization as well as for the reduction of misfolded protein aggregates. Involved in the regulation of synaptic vesicle recycling, controls STON2 protein stability in collaboration with the COP9 signalosome complex (CSN). In the nucleus, may link the cytoskeleton with the nuclear envelope, this mechanism seems to be crucial for the control of nuclear polarity, cell movement and, specifically in neurons, nuclear envelope integrity. Participates in the cellular trafficking and may regulate the subcellular location of multipass membrane proteins such as the dopamine transporter SLC6A3, leading to the modulation of dopamine neurotransmission. In the endoplasmic reticulum, plays a role in the quality control of protein folding by increasing clearance of misfolded proteins such as SGCE variants or holding them in an intermediate state for proper refolding. May have a redundant function with TOR1B in non-neural tissues. The polypeptide is Torsin-1A (TOR1A) (Macaca fascicularis (Crab-eating macaque)).